The following is a 517-amino-acid chain: Protein disulfide isomerase-like 1-2 (517 aa).

The N-terminal stretch at 1 to 23 is a signal peptide; that stretch reads MAVNLVLSFALAILISSSPTAVG. The Thioredoxin 1 domain maps to 24–143; sequence VDATEELKEA…IVEYLKRQVG (120 aa). Residue N41 is glycosylated (N-linked (GlcNAc...) asparagine). Catalysis depends on nucleophile residues C61 and C64. C61 and C64 are oxidised to a cystine. N301 carries an N-linked (GlcNAc...) asparagine glycan. Residues 357–484 form the Thioredoxin 2 domain; it reads VEYGNLTPYV…IISFINENRG (128 aa). Active-site nucleophile residues include C407 and C410. A disulfide bridge connects residues C407 and C410. A Prevents secretion from ER motif is present at residues 514-517; sequence KDEL.

Belongs to the protein disulfide isomerase family.

It is found in the endoplasmic reticulum lumen. The enzyme catalyses Catalyzes the rearrangement of -S-S- bonds in proteins.. In terms of biological role, acts as a protein-folding catalyst that interacts with nascent polypeptides to catalyze the formation, isomerization, and reduction or oxidation of disulfide bonds. May play a role in storage protein biogenesis. This Oryza sativa subsp. japonica (Rice) protein is Protein disulfide isomerase-like 1-2 (PDIL1-2).